We begin with the raw amino-acid sequence, 238 residues long: Large ribosomal subunit protein uL2 (238 aa).

The segment covering 1–11 (MGKRLISQNRG) has biased composition (polar residues). Disordered regions lie at residues 1–22 (MGKR…APSH) and 202–223 (FGGG…APPG).

It belongs to the universal ribosomal protein uL2 family. Part of the 50S ribosomal subunit. Forms a bridge to the 30S subunit in the 70S ribosome.

Functionally, one of the primary rRNA binding proteins. Required for association of the 30S and 50S subunits to form the 70S ribosome, for tRNA binding and peptide bond formation. It has been suggested to have peptidyltransferase activity; this is somewhat controversial. Makes several contacts with the 16S rRNA in the 70S ribosome. The polypeptide is Large ribosomal subunit protein uL2 (Methanosarcina acetivorans (strain ATCC 35395 / DSM 2834 / JCM 12185 / C2A)).